A 430-amino-acid polypeptide reads, in one-letter code: Histidine--tRNA ligase (430 aa).

The protein belongs to the class-II aminoacyl-tRNA synthetase family. Homodimer.

Its subcellular location is the cytoplasm. It carries out the reaction tRNA(His) + L-histidine + ATP = L-histidyl-tRNA(His) + AMP + diphosphate + H(+). In Anaplasma marginale (strain Florida), this protein is Histidine--tRNA ligase.